The sequence spans 379 residues: tRNA 2-selenouridine synthase (379 aa).

The Rhodanese domain occupies 17–140 (FLSGAPLLDT…MRRFLIESLE (124 aa)). The active-site S-selanylcysteine intermediate is the Cys-100.

It belongs to the SelU family. In terms of assembly, monomer.

The catalysed reaction is 5-methylaminomethyl-2-thiouridine(34) in tRNA + selenophosphate + (2E)-geranyl diphosphate + H2O + H(+) = 5-methylaminomethyl-2-selenouridine(34) in tRNA + (2E)-thiogeraniol + phosphate + diphosphate. The enzyme catalyses 5-methylaminomethyl-2-thiouridine(34) in tRNA + (2E)-geranyl diphosphate = 5-methylaminomethyl-S-(2E)-geranyl-thiouridine(34) in tRNA + diphosphate. It catalyses the reaction 5-methylaminomethyl-S-(2E)-geranyl-thiouridine(34) in tRNA + selenophosphate + H(+) = 5-methylaminomethyl-2-(Se-phospho)selenouridine(34) in tRNA + (2E)-thiogeraniol. It carries out the reaction 5-methylaminomethyl-2-(Se-phospho)selenouridine(34) in tRNA + H2O = 5-methylaminomethyl-2-selenouridine(34) in tRNA + phosphate. Its function is as follows. Involved in the post-transcriptional modification of the uridine at the wobble position (U34) of tRNA(Lys), tRNA(Glu) and tRNA(Gln). Catalyzes the conversion of 2-thiouridine (S2U-RNA) to 2-selenouridine (Se2U-RNA). Acts in a two-step process involving geranylation of 2-thiouridine (S2U) to S-geranyl-2-thiouridine (geS2U) and subsequent selenation of the latter derivative to 2-selenouridine (Se2U) in the tRNA chain. This Hahella chejuensis (strain KCTC 2396) protein is tRNA 2-selenouridine synthase.